The chain runs to 740 residues: NAD(P)H-quinone oxidoreductase subunit 5, chloroplastic (740 aa).

16 helical membrane passes run 9 to 29 (WIIP…LLLI), 39 to 59 (IWAF…TKLA), 89 to 109 (IDPL…MVLI), 125 to 145 (FAYM…PNLI), 147 to 167 (IHIF…FWFT), 185 to 205 (GDFG…SFEF), 231 to 251 (AFLL…HVWL), 259 to 279 (TPIS…FLVA), 281 to 301 (LLPL…IGLI), 328 to 348 (LGYI…FHLI), 355 to 375 (ALLF…VGYS), 397 to 417 (TTFF…CFWS), 426 to 446 (WLYS…TAFY), 548 to 568 (TMLF…CIGI), 607 to 627 (FYSV…YGSV), and 719 to 739 (GRIS…LLLV).

This sequence belongs to the complex I subunit 5 family. In terms of assembly, NDH is composed of at least 16 different subunits, 5 of which are encoded in the nucleus.

The protein localises to the plastid. The protein resides in the chloroplast thylakoid membrane. The enzyme catalyses a plastoquinone + NADH + (n+1) H(+)(in) = a plastoquinol + NAD(+) + n H(+)(out). The catalysed reaction is a plastoquinone + NADPH + (n+1) H(+)(in) = a plastoquinol + NADP(+) + n H(+)(out). Functionally, NDH shuttles electrons from NAD(P)H:plastoquinone, via FMN and iron-sulfur (Fe-S) centers, to quinones in the photosynthetic chain and possibly in a chloroplast respiratory chain. The immediate electron acceptor for the enzyme in this species is believed to be plastoquinone. Couples the redox reaction to proton translocation, and thus conserves the redox energy in a proton gradient. The protein is NAD(P)H-quinone oxidoreductase subunit 5, chloroplastic (ndhF) of Nuphar advena (Common spatterdock).